Consider the following 273-residue polypeptide: Photosystem I chlorophyll a/b-binding protein 3-1, chloroplastic (273 aa).

Residues 1–39 (MAAQALVSSSLTSSVQTARQIFGSKPVASASQKKSSFVV) constitute a chloroplast transit peptide. W56 serves as a coordination point for chlorophyll b. F76, S82, and E100 together coordinate chlorophyll a. R105 serves as a coordination point for chlorophyll b. Residues 106 to 126 (FAMLGAAGAIAPEILGKAGLI) traverse the membrane as a helical segment. I140 contacts chlorophyll b. The chain crosses the membrane as a helical span at residues 146–166 (YTYWADNYTLFVLEMALMGFA). 2 residues coordinate chlorophyll b: E167 and R170. S195 is modified (phosphoserine). K224, E225, N228, R230, Q242, and H257 together coordinate chlorophyll a. The chain crosses the membrane as a helical span at residues 231–251 (LAMLAILGYFIQGLVTGVGPY). Residue F272 participates in chlorophyll b binding.

This sequence belongs to the light-harvesting chlorophyll a/b-binding (LHC) protein family. As to quaternary structure, the LHC complex consists of chlorophyll a-b binding proteins. Red-emitting heterodimer with LHCA2. Interacts with LHCA5. Binds to carotenoids. Binds at least 14 chlorophylls (8 Chl-a and 6 Chl-b) and carotenoids such as lutein and neoxanthin. serves as cofactor. Post-translationally, photoregulated by reversible phosphorylation of its threonine residues.

Its subcellular location is the plastid. The protein resides in the chloroplast thylakoid membrane. The light-harvesting complex (LHC) functions as a light receptor, it captures and delivers excitation energy to photosystems with which it is closely associated, here photosystem I. The polypeptide is Photosystem I chlorophyll a/b-binding protein 3-1, chloroplastic (Arabidopsis thaliana (Mouse-ear cress)).